A 300-amino-acid polypeptide reads, in one-letter code: U6 snRNA methylphosphate capping enzyme Amus (300 aa).

Over residues 1 to 12 (MDLENNNNTPLT) the composition is skewed to polar residues. Disordered stretches follow at residues 1–21 (MDLENNNNTPLTGKQAEKCAK) and 34–68 (VESKRLKKEESNVEATSRPPAQSPKKRLHLNGKPM). The span at 34–44 (VESKRLKKEES) shows a compositional bias: basic and acidic residues. Residues 95 to 300 (DIRLDVLGTQ…KRPIQIFTKS (206 aa)) enclose the Bin3-type SAM domain. 2 residues coordinate S-adenosyl-L-methionine: Asn119 and Asp140.

Belongs to the methyltransferase superfamily.

The protein resides in the nucleus. Functionally, probable S-adenosyl-L-methionine-dependent methyltransferase that binds and stabilizes U6 snRNA, probably by adding a methylphosphate cap at its 5'-end. Required for U6 stability, but not stability of 7SK snRNAs, other miRNAs or tRNAs. U6 stabilization is required for efficient pre-mRNA splicing. Essential for organismal and germline development. This Drosophila melanogaster (Fruit fly) protein is U6 snRNA methylphosphate capping enzyme Amus.